A 468-amino-acid polypeptide reads, in one-letter code: MSSGKITQVVGPVVDVAFAAEDKLPEINNALVVYKNDDSKQKVVLEVALELGDGVVRTIAMESTDGLTRGMEVLDTGRPISVPVGKETLGRVFNVLGDTIDLEESFPADFEREPIHKKAPAFDELSTSSEILETGIKVIDLLAPYLKGGKVGLFGGAGVGKTVLIQELIHNIAQEHGGISVFTGVGERTREGNDLYWEMKESGVIEKTAMVFGQMNEPPGARMRVALTGLTIAEYFRDVEGQDVLLFIDNIFRFTQAGSEVSALLGRMPSAVGYQPTLATEMGQLQERITSTKKGSVTSIQAIYVPADDYTDPAPATAFAHLDSTTNLERKLTQLGIYPAVDPLASSSRALAPQIVGEEHYAVAMEVKRVLQRYQELQDIIAILGMDELSDEEKTLVGRARRIQFFLSQNFNVAEQFTGMPGSYVPVAETVKGFKEILDGKHDHLPEDAFRNVGSIEDVVAKAAKMKF.

Residue 155–162 participates in ATP binding; it reads GGAGVGKT.

It belongs to the ATPase alpha/beta chains family. F-type ATPases have 2 components, CF(1) - the catalytic core - and CF(0) - the membrane proton channel. CF(1) has five subunits: alpha(3), beta(3), gamma(1), delta(1), epsilon(1). CF(0) has three main subunits: a(1), b(2) and c(9-12). The alpha and beta chains form an alternating ring which encloses part of the gamma chain. CF(1) is attached to CF(0) by a central stalk formed by the gamma and epsilon chains, while a peripheral stalk is formed by the delta and b chains.

It is found in the cell membrane. The enzyme catalyses ATP + H2O + 4 H(+)(in) = ADP + phosphate + 5 H(+)(out). Functionally, produces ATP from ADP in the presence of a proton gradient across the membrane. The catalytic sites are hosted primarily by the beta subunits. The chain is ATP synthase subunit beta from Streptococcus suis (strain 98HAH33).